The primary structure comprises 258 residues: MKVMMALLQKEWLEGWKSGKLIWLPIAMMIVGLTQPLTIYYMPEIIAHGGNLPDGMKISFTMPSGSEVMVSTLSQFNTLGMALVIFSVMGSVANERNQGVTALIMSRPVTAAHYIVSKWLIQSVIGIMSFAAGYGLAYYYVRLLFEDASFSRFAASLGLYALWVIFIVTAGLAGSTIFRSVGAAAACGIGLTAAVSFAVSLFPDGAKWLPAEICKQAEHILLHGERADFFGWSLTFSILCIMLLAVFSVWRFRRYESY.

Transmembrane regions (helical) follow at residues leucine 21–tyrosine 41, leucine 73–alanine 93, tryptophan 119–tyrosine 139, phenylalanine 153–alanine 173, glycine 182–phenylalanine 202, and phenylalanine 229–valine 249.

Its subcellular location is the cell membrane. This is an uncharacterized protein from Bacillus subtilis (strain 168).